The following is a 300-amino-acid chain: MNFQGLVLTDNCKNQWVVGPLIGKGGFGSIYTTNDNNYVVKIEPKANGSLFTEQAFYTRVLKPSVIEEWKKSHNIKHVGLITCKAFGLYKSINVEYRFLVINRLGVDLDAVIRANNNRLPKRSVMLIGIEILNTIQFMHEQGYSHGDIKASNIVLDQIDKNKLYLVDYGLVSKFMSNGEHVPFIRNPNKMDNGTLEFTPIDSHKGYVVSRRGDLETLGYCMIRWLGGILPWTKISETKNCALVSATKQKYVNNTATLLMTSLQYAPRELLQYITMVNSLTYFEEPNYDEFRHILMQGVYY.

Residues 16 to 282 (WVVGPLIGKG…ITMVNSLTYF (267 aa)) enclose the Protein kinase domain. Residues 22 to 30 (IGKGGFGSI) and Lys45 each bind ATP. Asp147 functions as the Proton acceptor in the catalytic mechanism.

This sequence belongs to the protein kinase superfamily. Ser/Thr protein kinase family. Poxviruses subfamily. In terms of assembly, interacts with host JIP1; this interaction increases the amount of MAPK bound to JIP1 and subsequently increases the activity of transcription factors, such as JUN, that respond to these complexes. Interacts with protein OPG198; this interaction inhibits the repressive activity of OPG198 pseudokinase on viral replication factory formation. Mg(2+) is required as a cofactor. In terms of processing, autophosphorylated.

It localises to the virion. It is found in the host cytoplasm. It catalyses the reaction L-seryl-[protein] + ATP = O-phospho-L-seryl-[protein] + ADP + H(+). The catalysed reaction is L-threonyl-[protein] + ATP = O-phospho-L-threonyl-[protein] + ADP + H(+). Its function is as follows. Essential serine/threonine-protein kinase that plays different role in the viral life cycle. Phosphorylates the host small ribosomal protein RACK1 thereby customizing the ribosomes to a state optimal for viral mRNAs (which contain poly-A leaders) but not for host mRNAs. Facilitates viral DNA replication by inhibiting host BANF1, a cellular host defense responsive to foreign DNA. Phosphorylates host BANF1 on serine and threonine residues; this leads to BANF1 relocalization to the cytoplasm, loss of dimerization and impaired DNA binding activity. Indeed, BANF1 activity depends on its DNA-binding property which is blocked by VPK1-mediated phosphorylation. Required for viral intermediate genes expression, probably by inhibiting host BANF1. Modulates cellular responses via host JUN by two different mechanisms, either by direct phosphorylation or by modulation of upstream JIP1-MAPK complexes. Seems to participate in the accumulation/processing of late proteins and thus in virion maturation. In addition, inhibits B12 repressive activity on viral DNA replication via a phosphorylation-dependent mechanism. The polypeptide is B1 kinase (OPG187) (Homo sapiens (Human)).